A 219-amino-acid polypeptide reads, in one-letter code: Probable GTP-binding protein EngB (219 aa).

One can recognise an EngB-type G domain in the interval 31-205 (VGVEIAFAGR…LSILNEWCHP (175 aa)). Residues 39–46 (GRSNAGKS), 66–70 (GRTQL), 84–87 (DLPG), 151–154 (TKSD), and 184–186 (FSA) each bind GTP. Residues Ser46 and Thr68 each contribute to the Mg(2+) site.

The protein belongs to the TRAFAC class TrmE-Era-EngA-EngB-Septin-like GTPase superfamily. EngB GTPase family. The cofactor is Mg(2+).

In terms of biological role, necessary for normal cell division and for the maintenance of normal septation. The chain is Probable GTP-binding protein EngB from Shewanella sp. (strain ANA-3).